We begin with the raw amino-acid sequence, 162 residues long: D-aminoacyl-tRNA deacylase (162 aa).

The Gly-cisPro motif, important for rejection of L-amino acids motif lies at 145-146 (GP).

It belongs to the DTD family. Homodimer.

The protein localises to the cytoplasm. The catalysed reaction is glycyl-tRNA(Ala) + H2O = tRNA(Ala) + glycine + H(+). It carries out the reaction a D-aminoacyl-tRNA + H2O = a tRNA + a D-alpha-amino acid + H(+). An aminoacyl-tRNA editing enzyme that deacylates mischarged D-aminoacyl-tRNAs. Also deacylates mischarged glycyl-tRNA(Ala), protecting cells against glycine mischarging by AlaRS. Acts via tRNA-based rather than protein-based catalysis; rejects L-amino acids rather than detecting D-amino acids in the active site. By recycling D-aminoacyl-tRNA to D-amino acids and free tRNA molecules, this enzyme counteracts the toxicity associated with the formation of D-aminoacyl-tRNA entities in vivo and helps enforce protein L-homochirality. The chain is D-aminoacyl-tRNA deacylase from Bifidobacterium longum subsp. infantis (strain ATCC 15697 / DSM 20088 / JCM 1222 / NCTC 11817 / S12).